A 1066-amino-acid chain; its full sequence is Bifunctional cytochrome P450/NADPH--P450 reductase (1066 aa).

Residues 1 to 480 (MAESVPIPEP…LAGNGATSSS (480 aa)) are cytochrome P450. Position 407 (Cys407) interacts with heme. The tract at residues 481–1066 (THNIKAAANL…NERFATDVFD (586 aa)) is NADPH-P-450 reductase. The region spanning 500–641 (MAIFYGSNSG…DFEAWEDIVL (142 aa)) is the Flavodoxin-like domain. Residues 506–511 (SNSGTC), 554–557 (SYEG), Cys588, and Thr596 contribute to the FMN site. In terms of domain architecture, FAD-binding FR-type spans 676–904 (QDVEEALVVA…RASSEAFHLP (229 aa)).

This sequence in the N-terminal section; belongs to the cytochrome P450 family. The cofactor is FAD. FMN is required as a cofactor. It depends on heme as a cofactor.

The protein localises to the membrane. It carries out the reaction an organic molecule + reduced [NADPH--hemoprotein reductase] + O2 = an alcohol + oxidized [NADPH--hemoprotein reductase] + H2O + H(+). The catalysed reaction is 2 oxidized [cytochrome P450] + NADPH = 2 reduced [cytochrome P450] + NADP(+) + H(+). With respect to regulation, stimulated NADPH--cytochrome reductase activity in the presence of substrate. Inhibited by fatty acid substrates longer than 13 carbons and the degree of inhibition increases with increasing chain length. Functionally, functions as a fatty acid monooxygenase. Catalyzes hydroxylation of fatty acids at omega-1, omega-2 and omega-3 positions. Shows activity toward fatty acids with a chain length of 9-18 carbons with optimum chain lengths of 12-14 carbons (lauric, tridecylic and myristic acids). Can also use shorter saturated fatty acids with a chain length of 9 or 10 carbons as substrates. Also displays a NADPH-dependent reductase activity in the C-terminal domain, which allows electron transfer from NADPH to the heme iron of the cytochrome P450 N-terminal domain. In Fusarium oxysporum (Fusarium vascular wilt), this protein is Bifunctional cytochrome P450/NADPH--P450 reductase.